The sequence spans 914 residues: Coatomer subunit beta' (914 aa).

7 WD repeats span residues 13-54 (SRSD…KDFE), 55-94 (VCDV…KVHS), 97-136 (AHSD…ACQR), 140-180 (GHTH…ANFT), 183-224 (GHEK…CVQT), 227-266 (GHAQ…LETC), and 352-390 (ACEI…NKAF).

This sequence belongs to the WD repeat COPB2 family. As to quaternary structure, oligomeric complex that consists of at least the alpha, beta, beta', gamma, delta, epsilon and zeta subunits.

It localises to the cytoplasm. The protein resides in the golgi apparatus membrane. The protein localises to the cytoplasmic vesicle. Its subcellular location is the COPI-coated vesicle membrane. In terms of biological role, the coatomer is a cytosolic protein complex that binds to dilysine motifs and reversibly associates with Golgi non-clathrin-coated vesicles, which further mediate biosynthetic protein transport from the ER, via the Golgi up to the trans Golgi network. Coatomer complex is required for budding from Golgi membranes, and is essential for the retrograde Golgi-to-ER transport of dilysine-tagged proteins. The sequence is that of Coatomer subunit beta' from Drosophila melanogaster (Fruit fly).